Consider the following 494-residue polypeptide: Cobyric acid synthase (494 aa).

Residues 254-453 (KQTVAVIAYP…LHGLFEDPGA (200 aa)) form the GATase cobBQ-type domain. C338 (nucleophile) is an active-site residue. Residue H445 is part of the active site.

It belongs to the CobB/CobQ family. CobQ subfamily.

It participates in cofactor biosynthesis; adenosylcobalamin biosynthesis. In terms of biological role, catalyzes amidations at positions B, D, E, and G on adenosylcobyrinic A,C-diamide. NH(2) groups are provided by glutamine, and one molecule of ATP is hydrogenolyzed for each amidation. This is Cobyric acid synthase from Albidiferax ferrireducens (strain ATCC BAA-621 / DSM 15236 / T118) (Rhodoferax ferrireducens).